Reading from the N-terminus, the 425-residue chain is UDP-N-acetylglucosamine 1-carboxyvinyltransferase (425 aa).

Position 22–23 (22–23) interacts with phosphoenolpyruvate; it reads KN. Position 91 (Arg-91) interacts with UDP-N-acetyl-alpha-D-glucosamine. The active-site Proton donor is the Cys-115. A 2-(S-cysteinyl)pyruvic acid O-phosphothioketal modification is found at Cys-115. Residues 120–124, Asp-305, and Val-327 contribute to the UDP-N-acetyl-alpha-D-glucosamine site; that span reads RPIDL.

Belongs to the EPSP synthase family. MurA subfamily.

It localises to the cytoplasm. The enzyme catalyses phosphoenolpyruvate + UDP-N-acetyl-alpha-D-glucosamine = UDP-N-acetyl-3-O-(1-carboxyvinyl)-alpha-D-glucosamine + phosphate. It functions in the pathway cell wall biogenesis; peptidoglycan biosynthesis. In terms of biological role, cell wall formation. Adds enolpyruvyl to UDP-N-acetylglucosamine. This Coprothermobacter proteolyticus (strain ATCC 35245 / DSM 5265 / OCM 4 / BT) protein is UDP-N-acetylglucosamine 1-carboxyvinyltransferase.